Consider the following 260-residue polypeptide: Carbonic anhydrase 2 (260 aa).

At Ser-2 the chain carries N-acetylserine. Residue Ser-2 is modified to Phosphoserine. One can recognise an Alpha-carbonic anhydrase domain in the interval 3–259 (HHWGYGKHNG…LKNRQIKASF (257 aa)). Catalysis depends on His-64, which acts as the Proton donor/acceptor. Zn(2+) is bound by residues His-94, His-96, and His-119. 2 positions are modified to phosphoserine: Ser-165 and Ser-172. Position 198 to 199 (198 to 199 (TT)) interacts with substrate.

Belongs to the alpha-carbonic anhydrase family. Interacts with SLC4A4. Interaction with SLC4A7 regulates SLC4A7 transporter activity. Interacts with SLC26A6 isoform 4 (via C-terminus cytoplasmic domain). Requires Zn(2+) as cofactor. The cofactor is Co(2+).

The protein resides in the cytoplasm. It is found in the cell membrane. The catalysed reaction is hydrogencarbonate + H(+) = CO2 + H2O. The enzyme catalyses urea = cyanamide + H2O. Activated by X-ray, histamine, L-adrenaline, L- and D-phenylalanine, L- and D-histidine, L-His-OMe and beta-Ala-His (carnosine). Competitively inhibited by saccharin, thioxolone, coumarins, 667-coumate, celecoxib (Celebrex), valdecoxib (Bextra), SC-125, SC-560, diclofenac, acetate, azide, bromide, sulfonamide derivatives such as acetazolamide (AZA), methazolamide (MZA), ethoxzolamide (EZA), dichlorophenamide (DCP), brinzolamide, dansylamide, thiabendazole-5-sulfonamide, trifluoromethane sulfonamide and N-hydroxysulfamide, fructose-based sugar sulfamate RWJ-37497, and Foscarnet (phosphonoformate trisodium salt). Repressed strongly by hydrogen sulfide(HS) and weakly by nitrate (NO(3)). Esterase activity weakly reduced by cyanamide. N-hydroxyurea interferes with zinc binding and inhibit activity. Its function is as follows. Catalyzes the reversible hydration of carbon dioxide. Can also hydrate cyanamide to urea. Stimulates the chloride-bicarbonate exchange activity of SLC26A6. Essential for bone resorption and osteoclast differentiation. Involved in the regulation of fluid secretion into the anterior chamber of the eye. Contributes to intracellular pH regulation in the duodenal upper villous epithelium during proton-coupled peptide absorption. The polypeptide is Carbonic anhydrase 2 (CA2) (Homo sapiens (Human)).